The sequence spans 166 residues: Transmembrane protein 190 (166 aa).

The first 21 residues, 1 to 21 (MVGSGISALGLLLLMQGSVDA), serve as a signal peptide directing secretion. The Extracellular segment spans residues 22–81 (NGIQGFFYPWSCEGDVWDRESCGGQAAIENPNLCLRLRCCYRDGVCYHQRPDENMRRKHM). Residues 31–71 (WSCEGDVWDRESCGGQAAIENPNLCLRLRCCYRDGVCYHQR) enclose the P-type domain. Intrachain disulfides connect cysteine 33/cysteine 61, cysteine 43/cysteine 60, and cysteine 55/cysteine 67. A helical transmembrane segment spans residues 82 to 102 (WALGWTCGSLLFLITSICLFW). Residues 103–166 (WARRQDMLHL…VSGEDTGGEE (64 aa)) lie on the Cytoplasmic side of the membrane. Positions 130 to 166 (LSKDRRSANKSTTVLQSPGGEVETAAAVSGEDTGGEE) are disordered.

In terms of tissue distribution, detected in testis and in a mixture of spermatogenic cells at various stages (testicular germ cells). Not detected in heart, brain, spleen, lung, liver, skeletal muscle and kidney.

It localises to the membrane. This is Transmembrane protein 190 (Tmem190) from Mus musculus (Mouse).